Reading from the N-terminus, the 231-residue chain is Phosphatidylserine decarboxylase proenzyme (231 aa).

Residue Ser-188 is the Schiff-base intermediate with substrate; via pyruvic acid of the active site. Residue Ser-188 is modified to Pyruvic acid (Ser); by autocatalysis.

It belongs to the phosphatidylserine decarboxylase family. PSD-A subfamily. As to quaternary structure, heterodimer of a large membrane-associated beta subunit and a small pyruvoyl-containing alpha subunit. Requires pyruvate as cofactor. Is synthesized initially as an inactive proenzyme. Formation of the active enzyme involves a self-maturation process in which the active site pyruvoyl group is generated from an internal serine residue via an autocatalytic post-translational modification. Two non-identical subunits are generated from the proenzyme in this reaction, and the pyruvate is formed at the N-terminus of the alpha chain, which is derived from the carboxyl end of the proenzyme. The post-translation cleavage follows an unusual pathway, termed non-hydrolytic serinolysis, in which the side chain hydroxyl group of the serine supplies its oxygen atom to form the C-terminus of the beta chain, while the remainder of the serine residue undergoes an oxidative deamination to produce ammonia and the pyruvoyl prosthetic group on the alpha chain.

It localises to the cell membrane. The enzyme catalyses a 1,2-diacyl-sn-glycero-3-phospho-L-serine + H(+) = a 1,2-diacyl-sn-glycero-3-phosphoethanolamine + CO2. Its pathway is phospholipid metabolism; phosphatidylethanolamine biosynthesis; phosphatidylethanolamine from CDP-diacylglycerol: step 2/2. Catalyzes the formation of phosphatidylethanolamine (PtdEtn) from phosphatidylserine (PtdSer). The protein is Phosphatidylserine decarboxylase proenzyme of Rickettsia peacockii (strain Rustic).